We begin with the raw amino-acid sequence, 562 residues long: Cell division protein FtsZ (562 aa).

GTP-binding positions include 23-27 (GAGGN), 110-112 (GTG), E141, R145, and D189. Residues 404–413 (PAAARPAQQP) show a composition bias toward low complexity. Disordered stretches follow at residues 404 to 428 (PAAA…RLDP) and 462 to 562 (ETAQ…RQAN). The span at 418 to 428 (FRPDPQLRLDP) shows a compositional bias: basic and acidic residues. Low complexity-rich tracts occupy residues 464–486 (AQAA…QPQR) and 500–510 (GLLRRPAAAQP).

It belongs to the FtsZ family. Homodimer. Polymerizes to form a dynamic ring structure in a strictly GTP-dependent manner. Interacts directly with several other division proteins. Interacts with FtsZ-like protein (also called FtsZm).

Its subcellular location is the cytoplasm. Its function is as follows. Essential cell division protein that forms a contractile ring structure (Z ring) at the future cell division site. The regulation of the ring assembly controls the timing and the location of cell division. One of the functions of the FtsZ ring is to recruit other cell division proteins to the septum to produce a new cell wall between the dividing cells. Binds GTP and shows GTPase activity. Mild overexpression impairs cell division, leading to very elongated cells. Isolated protein forms filaments and bundles in the presence of GTP. The protein is Cell division protein FtsZ of Magnetospirillum gryphiswaldense (strain DSM 6361 / JCM 21280 / NBRC 15271 / MSR-1).